The primary structure comprises 126 residues: Protein ApaG (126 aa).

An ApaG domain is found at Ser-2–Gln-126.

The sequence is that of Protein ApaG from Shewanella denitrificans (strain OS217 / ATCC BAA-1090 / DSM 15013).